Reading from the N-terminus, the 432-residue chain is Tryptophan--tRNA ligase (432 aa).

ATP is bound by residues 13–15 (TTS) and 21–22 (GN). A 'HIGH' region motif is present at residues 14–22 (TSGTPHLGN). D146 lines the L-tryptophan pocket. Residues 158 to 160 (GRD), L198, and 205 to 209 (KMSKS) contribute to the ATP site. A 'KMSKS' region motif is present at residues 205-209 (KMSKS).

Belongs to the class-I aminoacyl-tRNA synthetase family. As to quaternary structure, homodimer.

It is found in the cytoplasm. It catalyses the reaction tRNA(Trp) + L-tryptophan + ATP = L-tryptophyl-tRNA(Trp) + AMP + diphosphate + H(+). Its function is as follows. Catalyzes the attachment of tryptophan to tRNA(Trp). The polypeptide is Tryptophan--tRNA ligase (Xanthomonas axonopodis pv. citri (strain 306)).